Consider the following 251-residue polypeptide: Cell division protein ZapD (251 aa).

It belongs to the ZapD family. Interacts with FtsZ.

It localises to the cytoplasm. Functionally, cell division factor that enhances FtsZ-ring assembly. Directly interacts with FtsZ and promotes bundling of FtsZ protofilaments, with a reduction in FtsZ GTPase activity. The chain is Cell division protein ZapD from Burkholderia cenocepacia (strain HI2424).